Consider the following 395-residue polypeptide: Ribosomal RNA large subunit methyltransferase G (395 aa).

This sequence belongs to the methyltransferase superfamily. RlmG family.

It localises to the cytoplasm. It carries out the reaction guanosine(1835) in 23S rRNA + S-adenosyl-L-methionine = N(2)-methylguanosine(1835) in 23S rRNA + S-adenosyl-L-homocysteine + H(+). Its function is as follows. Specifically methylates the guanine in position 1835 (m2G1835) of 23S rRNA. The protein is Ribosomal RNA large subunit methyltransferase G of Yersinia pestis (strain Pestoides F).